The primary structure comprises 526 residues: MSKAPLALLSVSDKSNIVEFAQGLIQAGFGLLSTGGTFRLLTEHNVAVTEVSDYTGFPEMMDGRVKTLHPKIHGGILGRRGTDDMVMSEHAIERIDLVVVNLYPFAETIARSDVTMNDAIENIDIGGPTMVRSAAKNHAHVGIVTDPADYTRVLEALGDSTALTATLRYDLAVKAFEHTAQYDGMIANFLGSRVNESQEPESFSRTFNVQLEKVQDLRYGENPHQKAAFYVENNSSKSKQASIATAKQLQGKALSYNNIADTDAALECVKAFSTPACVIVKHANPCGVAVDIDQVAAYRTAFSTDPESSFGGIIAFNRPLTLAAATAIIDNQFVEVIIAPSVEDGVLEATASKKNVRVLVCGDLPAPELRDRQLDYKRVNGGLLVQEQDLGLITAHDLKIVTDVQPTEAQIADLLFSWNVAKYVKSNAIVYAKGQRTIGVGAGQMSRVNSARIAAIKAEHAGLATEGAVMASDAFFPFRDGIDNAAEVGIAAIIQPGGSMRDDETIAAANEHGIAMVFTGMRHFRH.

The region spanning 1-145 (MSKAPLALLS…KNHAHVGIVT (145 aa)) is the MGS-like domain.

The protein belongs to the PurH family.

It carries out the reaction (6R)-10-formyltetrahydrofolate + 5-amino-1-(5-phospho-beta-D-ribosyl)imidazole-4-carboxamide = 5-formamido-1-(5-phospho-D-ribosyl)imidazole-4-carboxamide + (6S)-5,6,7,8-tetrahydrofolate. The enzyme catalyses IMP + H2O = 5-formamido-1-(5-phospho-D-ribosyl)imidazole-4-carboxamide. Its pathway is purine metabolism; IMP biosynthesis via de novo pathway; 5-formamido-1-(5-phospho-D-ribosyl)imidazole-4-carboxamide from 5-amino-1-(5-phospho-D-ribosyl)imidazole-4-carboxamide (10-formyl THF route): step 1/1. The protein operates within purine metabolism; IMP biosynthesis via de novo pathway; IMP from 5-formamido-1-(5-phospho-D-ribosyl)imidazole-4-carboxamide: step 1/1. This chain is Bifunctional purine biosynthesis protein PurH, found in Psychrobacter arcticus (strain DSM 17307 / VKM B-2377 / 273-4).